The following is a 314-amino-acid chain: DNA-directed RNA polymerase subunit alpha (314 aa).

The tract at residues 1–228 (MIEFEKPNIH…DHLSIFVNLT (228 aa)) is alpha N-terminal domain (alpha-NTD). The segment at 245–314 (KEKMLEMTIE…DLGLSLRKED (70 aa)) is alpha C-terminal domain (alpha-CTD).

The protein belongs to the RNA polymerase alpha chain family. Homodimer. The RNAP catalytic core consists of 2 alpha, 1 beta, 1 beta' and 1 omega subunit. When a sigma factor is associated with the core the holoenzyme is formed, which can initiate transcription.

The enzyme catalyses RNA(n) + a ribonucleoside 5'-triphosphate = RNA(n+1) + diphosphate. In terms of biological role, DNA-dependent RNA polymerase catalyzes the transcription of DNA into RNA using the four ribonucleoside triphosphates as substrates. This chain is DNA-directed RNA polymerase subunit alpha, found in Lactiplantibacillus plantarum (strain ATCC BAA-793 / NCIMB 8826 / WCFS1) (Lactobacillus plantarum).